A 456-amino-acid chain; its full sequence is Solute carrier family 49 member 4 homolog (456 aa).

At 1–29 (MGLEWSSPGERQPLLYPGGPRAPRVFGRR) the chain is on the cytoplasmic side. The short motif at 14-15 (LL) is the Di-leucine motif; mediates lysosomal localization element. The helical transmembrane segment at 30-50 (WLVLLLFSLLAFLQGLVWNSW) threads the bilayer. The Lumenal segment spans residues 51 to 67 (GPIQNSARTAYNFSGLD). Asparagine 62 carries an N-linked (GlcNAc...) asparagine glycan. Residues 68 to 88 (IALLVLWGPIGFLPCFLFMWL) form a helical membrane-spanning segment. At 89–95 (MDNRGLR) the chain is on the cytoplasmic side. The chain crosses the membrane as a helical span at residues 96 to 116 (VTVLLTALLMVLGAGLRCVPV). Residues 117 to 131 (QDLAVRRKLIHGGQL) lie on the Lumenal side of the membrane. A helical membrane pass occupies residues 132–152 (LNGFAGPTVMNAAPFLSTTWF). Residues 153–162 (SPDERATATA) are Cytoplasmic-facing. A helical transmembrane segment spans residues 163–183 (IASMLSYLGGACAFLVGPLVV). Residues 184–207 (PAPNSTSGLLLYSGSVGAIRDRIE) lie on the Lumenal side of the membrane. The N-linked (GlcNAc...) asparagine glycan is linked to asparagine 187. The chain crosses the membrane as a helical span at residues 208–228 (AVMYAEFGIIFVVFAAILAYF). Topologically, residues 229–259 (PSRPPVPPSVAAASRRLSYRTSILRLLSNVR) are cytoplasmic. The helical transmembrane segment at 260–280 (FLLIVLAYAIPLGFYAGWSGV) threads the bilayer. Topologically, residues 281–292 (LDLILTPVHVTQ) are lumenal. Residues 293 to 313 (VDAGWVGFWSIVGGCVVGIAV) traverse the membrane as a helical segment. Topologically, residues 314–326 (GRFADSIRGVLKP) are cytoplasmic. A helical transmembrane segment spans residues 327-347 (ILLLLFSGAALSSTWFTLTFL). Topologically, residues 348-362 (SNVTHLPLTTATLYT) are lumenal. N-linked (GlcNAc...) asparagine glycosylation is present at asparagine 349. Residues 363 to 383 (SCILIGVFLSGTVPIFFEMFV) traverse the membrane as a helical segment. Residues 384–392 (ETVYPIPEG) are Cytoplasmic-facing. A helical transmembrane segment spans residues 393 to 413 (ITCGVVTFLSNLFMGVLLLFL). Residues 414-420 (TLYQTNL) lie on the Lumenal side of the membrane. N-linked (GlcNAc...) asparagine glycosylation is present at asparagine 419. The chain crosses the membrane as a helical span at residues 421–441 (SWLNWCLTGSCFLSLLFIACF). Over 442–456 (RESYDRLYLDVFVSV) the chain is Cytoplasmic.

Belongs to the major facilitator superfamily.

It localises to the lysosome membrane. It catalyses the reaction pyridoxine(out) + n H(+)(out) = pyridoxine(in) + n H(+)(in). Mediates H(+)-dependent pyridoxine transport. This chain is Solute carrier family 49 member 4 homolog (slc49a4), found in Xenopus tropicalis (Western clawed frog).